Here is a 129-residue protein sequence, read N- to C-terminus: 4-amino-4-deoxychorismate mutase (129 aa).

In terms of domain architecture, Chorismate mutase spans 16-107; that stretch reads AAATDPLDAL…ETCRLEDEWI (92 aa).

It carries out the reaction 4-amino-4-deoxychorismate = 4-amino-4-deoxyprephenate. It participates in antibiotic biosynthesis. Its function is as follows. Involved in pristinamycin I biosynthesis. Probably catalyzes the conversion of 4-amino-4-deoxychorismate to 4-amino-4-deoxyprephenate. The protein is 4-amino-4-deoxychorismate mutase of Streptomyces pristinaespiralis.